Here is a 143-residue protein sequence, read N- to C-terminus: MFFGTFTPKLDDKGRLTLPAKFREELGEGLMVVKGQDRSLAVYPKAEFLVRAKKAAEASRTNPKARAFVRNLAASADEQNLDSQGRISVSVMHRDYAGLTKECVVIGNVDFIEIWDAESWADYSAEHEEDFSDGDDEVLATFL.

SpoVT-AbrB domains are found at residues 5-47 and 76-119; these read TFTP…PKAE and ADEQ…DAES.

It belongs to the MraZ family. In terms of assembly, forms oligomers.

The protein localises to the cytoplasm. It is found in the nucleoid. This Corynebacterium jeikeium (strain K411) protein is Transcriptional regulator MraZ.